The sequence spans 422 residues: Enolase (422 aa).

Glutamine 162 contributes to the (2R)-2-phosphoglycerate binding site. The Proton donor role is filled by glutamate 204. Mg(2+) is bound by residues aspartate 241, glutamate 284, and aspartate 311. Residues lysine 336, arginine 365, serine 366, and lysine 387 each contribute to the (2R)-2-phosphoglycerate site. Lysine 336 acts as the Proton acceptor in catalysis.

It belongs to the enolase family. As to quaternary structure, component of the RNA degradosome, a multiprotein complex involved in RNA processing and mRNA degradation. The cofactor is Mg(2+).

It is found in the cytoplasm. It localises to the secreted. The protein resides in the cell surface. It carries out the reaction (2R)-2-phosphoglycerate = phosphoenolpyruvate + H2O. It functions in the pathway carbohydrate degradation; glycolysis; pyruvate from D-glyceraldehyde 3-phosphate: step 4/5. Functionally, catalyzes the reversible conversion of 2-phosphoglycerate (2-PG) into phosphoenolpyruvate (PEP). It is essential for the degradation of carbohydrates via glycolysis. The chain is Enolase from Legionella pneumophila (strain Lens).